A 413-amino-acid chain; its full sequence is L-methionine gamma-lyase (413 aa).

Residues 75–77 (YGR) and 105–106 (GM) contribute to the pyridoxal 5'-phosphate site. Tyr131 provides a ligand contact to substrate. A pyridoxal 5'-phosphate-binding site is contributed by 218-220 (SAT). An N6-(pyridoxal phosphate)lysine modification is found at Lys221. Residue Arg365 coordinates substrate. Positions 388 to 413 (RLPETAGAGREPSRTALRLPERAADR) are disordered.

The protein belongs to the trans-sulfuration enzymes family. As to quaternary structure, homotetramer; dimer of active dimers. The cofactor is pyridoxal 5'-phosphate.

The catalysed reaction is L-methionine + H2O = methanethiol + 2-oxobutanoate + NH4(+). It carries out the reaction L-homocysteine + H2O = 2-oxobutanoate + hydrogen sulfide + NH4(+) + H(+). The enzyme catalyses L-cysteine + H2O = hydrogen sulfide + pyruvate + NH4(+) + H(+). Functionally, catalyzes the alpha,gamma-elimination of L-methionine to produce methanethiol, 2-oxobutanoate and ammonia. Is probably involved in L-methionine catabolism. Is also able to catalyze the alpha,gamma-elimination of L-homocysteine, and, to a lesser extent, the alpha,beta-elimination of L-cysteine. The sequence is that of L-methionine gamma-lyase from Streptomyces avermitilis (strain ATCC 31267 / DSM 46492 / JCM 5070 / NBRC 14893 / NCIMB 12804 / NRRL 8165 / MA-4680).